The sequence spans 96 residues: uncharacterized protein (96 aa).

2 consecutive transmembrane segments (helical) span residues 27 to 47 (LAFR…ALLI) and 50 to 70 (LSGV…SIVF).

It localises to the cell membrane. This is an uncharacterized protein from Haemophilus influenzae (strain ATCC 51907 / DSM 11121 / KW20 / Rd).